A 199-amino-acid polypeptide reads, in one-letter code: Holliday junction branch migration complex subunit RuvA (199 aa).

Residues 1–63 (MIASVRGEVL…EDSMTLYGFT (63 aa)) are domain I. Positions 64–142 (DAETRDLFLT…AAGAAGAPAG (79 aa)) are domain II. The tract at residues 143–153 (AARNGHAVRGP) is flexible linker. Positions 153-199 (PVVEALVGLGFAAKQAEEATDKVLAAEPEAGTSGALRAALSLLGKSR) are domain III.

This sequence belongs to the RuvA family. In terms of assembly, homotetramer. Forms an RuvA(8)-RuvB(12)-Holliday junction (HJ) complex. HJ DNA is sandwiched between 2 RuvA tetramers; dsDNA enters through RuvA and exits via RuvB. An RuvB hexamer assembles on each DNA strand where it exits the tetramer. Each RuvB hexamer is contacted by two RuvA subunits (via domain III) on 2 adjacent RuvB subunits; this complex drives branch migration. In the full resolvosome a probable DNA-RuvA(4)-RuvB(12)-RuvC(2) complex forms which resolves the HJ.

Its subcellular location is the cytoplasm. The RuvA-RuvB-RuvC complex processes Holliday junction (HJ) DNA during genetic recombination and DNA repair, while the RuvA-RuvB complex plays an important role in the rescue of blocked DNA replication forks via replication fork reversal (RFR). RuvA specifically binds to HJ cruciform DNA, conferring on it an open structure. The RuvB hexamer acts as an ATP-dependent pump, pulling dsDNA into and through the RuvAB complex. HJ branch migration allows RuvC to scan DNA until it finds its consensus sequence, where it cleaves and resolves the cruciform DNA. The chain is Holliday junction branch migration complex subunit RuvA from Mycobacterium avium (strain 104).